The following is a 108-amino-acid chain: UPF0060 membrane protein YnfA (108 aa).

Topologically, residues 1–5 (MIKTT) are periplasmic. Residues 6–26 (LLFFATALCEIIGCFLPWLWL) form a helical membrane-spanning segment. The Cytoplasmic portion of the chain corresponds to 27-30 (KRNA). A helical transmembrane segment spans residues 31 to 51 (SIWLLLPAGISLALFVWLLTL). At 52–60 (HPAASGRIY) the chain is on the periplasmic side. A helical membrane pass occupies residues 61 to 81 (AAYGGVYVCTALMWLRVVDGV). Residues 82–84 (KLT) lie on the Cytoplasmic side of the membrane. A helical transmembrane segment spans residues 85-105 (LYDWTGALIALCGMLIIVAGW). Topologically, residues 106–108 (GRT) are periplasmic.

Belongs to the UPF0060 family.

It localises to the cell inner membrane. This Shigella dysenteriae serotype 1 (strain Sd197) protein is UPF0060 membrane protein YnfA.